Consider the following 423-residue polypeptide: Guanine nucleotide-binding protein subunit beta (423 aa).

WD repeat units lie at residues 90–120 (GHNN…LIWD), 132–162 (LDSQ…TIYR), 179–208 (GHTC…ALWD), 220–256 (DHLG…YIWD), 268–298 (VNDS…NMYD), 348–377 (DNQG…VVWD), and 389–419 (GHGG…KIWS).

Belongs to the WD repeat G protein beta family. As to quaternary structure, g proteins are composed of 3 units, alpha, beta and gamma. The beta-gamma subunit complex (STE4-STE18 complex) interacts with PLP1 and PLP2. Interacts with SYG1.

Implicated in the a- and alpha-factor response pathway. The beta and gamma chains of the putative yeast mating response pathway G protein play a positive role in initiation of the mating response. The beta and gamma chains are required for the GTPase activity, for replacement of GDP by GTP, and for G protein-effector interaction. This chain is Guanine nucleotide-binding protein subunit beta (STE4), found in Saccharomyces cerevisiae (strain ATCC 204508 / S288c) (Baker's yeast).